Here is a 142-residue protein sequence, read N- to C-terminus: Hemoglobin subunit alpha (142 aa).

Residues 2–142 (VLSATDKSNV…VSTVLTSKYR (141 aa)) enclose the Globin domain. S4 is subject to Phosphoserine. An N6-succinyllysine mark is found at K8 and K12. Residue K17 is modified to N6-acetyllysine; alternate. K17 is subject to N6-succinyllysine; alternate. Residue Y25 is modified to Phosphotyrosine. Phosphoserine is present on S36. Residue K41 is modified to N6-succinyllysine. S50 bears the Phosphoserine mark. H59 is an O2 binding site. H88 serves as a coordination point for heme b. S103 bears the Phosphoserine mark. The residue at position 109 (T109) is a Phosphothreonine. Position 125 is a phosphoserine (S125). 2 positions are modified to phosphothreonine: T135 and T138. S139 bears the Phosphoserine mark.

Belongs to the globin family. In terms of assembly, heterotetramer of two alpha chains and two beta chains. In terms of tissue distribution, red blood cells.

Functionally, involved in oxygen transport from the lung to the various peripheral tissues. Its function is as follows. Hemopressin acts as an antagonist peptide of the cannabinoid receptor CNR1. Hemopressin-binding efficiently blocks cannabinoid receptor CNR1 and subsequent signaling. This Alces alces alces (European moose) protein is Hemoglobin subunit alpha (HBA).